A 92-amino-acid chain; its full sequence is Small ribosomal subunit protein uS19 (92 aa).

The protein belongs to the universal ribosomal protein uS19 family.

Functionally, protein S19 forms a complex with S13 that binds strongly to the 16S ribosomal RNA. The sequence is that of Small ribosomal subunit protein uS19 from Rickettsia africae (strain ESF-5).